Here is a 306-residue protein sequence, read N- to C-terminus: Heme A synthase (306 aa).

Topologically, residues 1 to 5 (MKALR) are cytoplasmic. The chain crosses the membrane as a helical span at residues 6 to 26 (AVSLANTAVMLLAVLWGAWVT). Residues 27–56 (SSDSGDGCGASWPLCKGTFMPDWDYAAIVE) are Extracellular-facing. An intrachain disulfide couples cysteine 34 to cysteine 41. Glutamate 56 is an active-site residue. The chain crosses the membrane as a helical span at residues 57-77 (FGHRVVSALAGLLSVAVLVWV). Histidine 59 is a heme o binding site. Topologically, residues 78–89 (ARVRPSETRLKR) are cytoplasmic. A helical transmembrane segment spans residues 90-110 (LAFGTFFFVVLQGGLGAAAVL). Over 111 to 116 (RPQPDL) the chain is Extracellular. The chain crosses the membrane as a helical span at residues 117 to 137 (VMALHFGFSLLCFTFALLVTV). Position 121 (histidine 121) interacts with heme o. The Cytoplasmic portion of the chain corresponds to 138–164 (ALGQGERAAFQRPDVSAQPVAPGLRTQ). Residues 165 to 185 (IWGLAVYTYLVVYLGAYVRHL) traverse the membrane as a helical segment. Residues 186-206 (GASMACTGWPLCNGELIPPLY) are Extracellular-facing. Residues cysteine 191 and cysteine 197 are joined by a disulfide bond. Residues 207–227 (GPVGANFAHRLGAALAVVLVL) form a helical membrane-spanning segment. Histidine 215 is a heme b binding site. The Cytoplasmic portion of the chain corresponds to 228–247 (RLWWTARRLTERDDLRRGAA). Residues 248 to 268 (WALALMAAQVASGALFPLGYL) form a helical membrane-spanning segment. Residues 269 to 277 (NLLTQLLHT) are Extracellular-facing. Histidine 276 provides a ligand contact to heme b. The helical transmembrane segment at 278-298 (GLITGFWGVLSYLCYLTLPVG) threads the bilayer. Over 299 to 306 (RETVAVSA) the chain is Cytoplasmic.

It belongs to the COX15/CtaA family. Type 1 subfamily. As to quaternary structure, interacts with CtaB. The cofactor is heme b.

Its subcellular location is the cell membrane. It catalyses the reaction Fe(II)-heme o + 2 A + H2O = Fe(II)-heme a + 2 AH2. Its pathway is porphyrin-containing compound metabolism; heme A biosynthesis; heme A from heme O: step 1/1. Its function is as follows. Catalyzes the conversion of heme O to heme A by two successive hydroxylations of the methyl group at C8. The first hydroxylation forms heme I, the second hydroxylation results in an unstable dihydroxymethyl group, which spontaneously dehydrates, resulting in the formyl group of heme A. This chain is Heme A synthase, found in Symbiobacterium thermophilum (strain DSM 24528 / JCM 14929 / IAM 14863 / T).